Here is a 662-residue protein sequence, read N- to C-terminus: Chromosomal replication initiator protein DnaA (662 aa).

The domain I, interacts with DnaA modulators stretch occupies residues 1-93 (MDDEQNVLAT…QVEGLGVRIA (93 aa)). The interval 93 to 322 (AAPATPTAER…STPAPANSSA (230 aa)) is domain II. The segment covering 96 to 105 (ATPTAERAAA) has biased composition (low complexity). The segment at 96 to 294 (ATPTAERAAA…SDGPVERDDE (199 aa)) is disordered. The span at 114 to 123 (SRPERPRGER) shows a compositional bias: basic and acidic residues. Over residues 166–199 (PPAAEYTPAAEYTPAAEYTPAAEYSPEPEYTPAT) the composition is skewed to low complexity. Basic and acidic residues-rich tracts occupy residues 236–248 (TPRR…RRDA) and 261–290 (PGDR…GPVE). A domain III, AAA+ region region spans residues 323-539 (SLNAKYTFET…GALIRVTAFA (217 aa)). ATP-binding residues include G367, G369, K370, and T371. Residues 540–662 (SLNGQPLDLS…LTARIKQRSR (123 aa)) are domain IV, binds dsDNA.

Belongs to the DnaA family. In terms of assembly, oligomerizes as a right-handed, spiral filament on DNA at oriC.

The protein resides in the cytoplasm. Plays an essential role in the initiation and regulation of chromosomal replication. ATP-DnaA binds to the origin of replication (oriC) to initiate formation of the DNA replication initiation complex once per cell cycle. Binds the DnaA box (a 9 base pair repeat at the origin) and separates the double-stranded (ds)DNA. Forms a right-handed helical filament on oriC DNA; dsDNA binds to the exterior of the filament while single-stranded (ss)DNA is stabiized in the filament's interior. The ATP-DnaA-oriC complex binds and stabilizes one strand of the AT-rich DNA unwinding element (DUE), permitting loading of DNA polymerase. After initiation quickly degrades to an ADP-DnaA complex that is not apt for DNA replication. Binds acidic phospholipids. This chain is Chromosomal replication initiator protein DnaA, found in Nocardia farcinica (strain IFM 10152).